The sequence spans 108 residues: Biogenesis of lysosome-related organelles complex 1 subunit CNL1 (108 aa).

The protein belongs to the BLOC1S4 family. In terms of assembly, component of the biogenesis of lysosome-related organelles complex-1 (BLOC-1).

It localises to the cytoplasm. In terms of biological role, component of the biogenesis of lysosome-related organelles complex-1 (BLOC-1), a complex that is involved in endosomal cargo sorting. This is Biogenesis of lysosome-related organelles complex 1 subunit CNL1 (CLN1) from Zygosaccharomyces rouxii (strain ATCC 2623 / CBS 732 / NBRC 1130 / NCYC 568 / NRRL Y-229).